We begin with the raw amino-acid sequence, 2039 residues long: Methylcytosine dioxygenase TET1 (2039 aa).

Residues M1–K19 are compositionally biased toward basic residues. Disordered stretches follow at residues M1–A79, V119–Q168, and D227–D286. 2 stretches are compositionally biased toward basic and acidic residues: residues K53–T65 and I138–N149. 2 stretches are compositionally biased toward polar residues: residues D150–Q168 and Q241–E265. The segment at L512–C657 is sufficient for binding to genomic CpG islands. A CXXC-type zinc finger spans residues E567–E608. Residues C574, C577, C580, C586, C589, C592, C602, and C607 each coordinate Zn(2+). 8 disordered regions span residues K613–D670, C711–P735, G820–S859, Q882–T906, Q964–L993, V1050–E1129, V1209–P1240, and K1322–Q1341. Residues E653–D670 are compositionally biased toward basic and acidic residues. Residues I825 to A835 show a composition bias toward polar residues. Over residues H840 to D852 the composition is skewed to basic and acidic residues. A Phosphoserine modification is found at S854. A compositionally biased stretch (low complexity) spans S884–S894. Basic and acidic residues predominate over residues K895–Q904. The span at A1053–N1064 shows a compositional bias: polar residues. A compositionally biased stretch (basic residues) spans K1094–P1116. Composition is skewed to polar residues over residues S1214 to Q1227 and Q1326 to Q1341. Zn(2+) is bound by residues C1371, C1373, C1430, H1456, and C1458. A 2-oxoglutarate-binding site is contributed by R1499. C1509, C1511, C1527, and C1536 together coordinate Zn(2+). An interaction with DNA region spans residues S1528–S1541. K1537 is covalently cross-linked (Glycyl lysine isopeptide (Lys-Gly) (interchain with G-Cter in ubiquitin)). C1628 contributes to the Zn(2+) binding site. C1644 is a 2-oxoglutarate binding site. H1650 contacts Zn(2+). 2 residues coordinate Fe cation: H1652 and D1654. N1657 contributes to the substrate binding site. Residue H1685 coordinates 2-oxoglutarate. Residues G1734 to H1743 are compositionally biased toward basic residues. 2 disordered regions span residues G1734 to T1760 and A1830 to L1901. Low complexity predominate over residues S1748–T1760. Over residues T1850–A1875 the composition is skewed to polar residues. Residues E1880–D1895 show a composition bias toward basic and acidic residues. Position 1939 (H1939) interacts with Fe cation. R1954–S1956 lines the 2-oxoglutarate pocket. A substrate-binding site is contributed by Y1960–H1962. H1970 is a binding site for Zn(2+).

It belongs to the TET family. In terms of assembly, interacts with SIN3A; recruits the transcriptional co-repressor SIN3A to gene promoters. Interacts with HCFC1. Interacts (via C-terminus) with OGT. Found in a complex composed of at least SINHCAF, SIN3A, HDAC1, SAP30, RBBP4, OGT and TET1. Interacts with QSER1. Interacts with NONO (via DNA-binding domain); this interaction recruits TET1 to genomic loci. Interacts with FOXA2; this interaction may recruit TET1 to specific enhancers to preserve their unmethylated status and hence allowing gene expression. Interacts with RNF2. Directly interacts (via C-terminus) with the DCAF1 component of the CRL4(VprBP) E3 ubiquitin-protein ligase complex. Interacts with UHRF1; this interaction induces the recruitment of TET1 to replicating heterochromatin. Interacts with DCAF1. It depends on Fe(2+) as a cofactor. Zn(2+) serves as cofactor. In terms of processing, glycosylated. Interaction with OGT leads to GlcNAcylation. Post-translationally, monoubiquitinated by the DCX (DDB1-CUL4-X-box) E3 ubiquitin-protein ligase complex called CRL4(VprBP) or CUL4A-RBX1-DDB1-DCAF1/VPRBP complex. Monoubiquitinated by the DCX (DDB1-CUL4-X-box) E3 ubiquitin-protein ligase complex called CRL4(VprBP) or CUL4A-RBX1-DDB1-DCAF1/VPRBP complex; this modification promotes binding to DNA. As to expression, expressed in germinal vesicle (GV) stage and MII-stage oocytes and in early embryos. Also detected somatic tissues, including brain, liver and kidney, but at very low levels. Predominantly expressed in early embryos. Also expressed in embryonic stem cells and in primordial germ cells. Expressed in adult tissues, including brain cortex, cerebellum, heart, kidney, liver, muscle and spleen, although at much lower levels than isoform 2. In the brain, expressed at higher levels in glial cells than in neurons. Expressed in placenta. Expressed in the pituitary, most probably in thyrotropes. In terms of tissue distribution, preferentially expressed in differentiated cells, including in cerebral cortex, cerebellum and thymus. Also expressed in heart, kidney, liver, muscle and spleen at much higher levels than isoform 1. In the brain, expressed at higher levels in neurons than in glial cells. Expressed in the olfactory bulb and in the mammary gland.

The protein localises to the nucleus. It localises to the chromosome. It carries out the reaction a 5-methyl-2'-deoxycytidine in DNA + 2-oxoglutarate + O2 = a 5-hydroxymethyl-2'-deoxycytidine in DNA + succinate + CO2. It catalyses the reaction a 5-hydroxymethyl-2'-deoxycytidine in DNA + 2-oxoglutarate + O2 = a 5-formyl-2'-deoxycytidine in DNA + succinate + CO2 + H2O. The enzyme catalyses a 5-formyl-2'-deoxycytidine in DNA + 2-oxoglutarate + O2 = a 5-carboxyl-2'-deoxycytidine in DNA + succinate + CO2 + H(+). In terms of biological role, dioxygenase that plays a key role in active DNA demethylation, by catalyzing the sequential oxidation of the modified genomic base 5-methylcytosine (5mC) into 5-hydroxymethylcytosine (5hmC), 5-formylcytosine (5fC), and 5-carboxylcytosine (5caC). In addition to its role in DNA demethylation, plays a more general role in chromatin regulation by recruiting histone modifying protein complexes to alter histone marks and chromatin accessibility, leading to both activation and repression of gene expression. Plays therefore a role in many biological processes, including stem cell maintenance, T- and B-cell development, inflammation regulation, iron homeostasis, neural activity or DNA repair. Involved in the balance between pluripotency and lineage commitment of cells it plays a role in embryonic stem cells maintenance and inner cell mass cell specification. Together with QSER1, plays an essential role in the protection and maintenance of transcriptional and developmental programs to inhibit the binding of DNMT3A/3B and therefore de novo methylation. May play a role in the pancreatic beta-cell specification during development. In this context, may function as an upstream epigenetic regulator of PAX4 presumably through direct recruitment by FOXA2 to a PAX4 enhancer to preserve its unmethylated status, thereby potentiating PAX4 expression to adopt beta-cell fate during endocrine lineage commitment. Under DNA hypomethylation conditions, such as in female meiotic germ cells, may induce epigenetic reprogramming of pericentromeric heterochromatin (PCH), the constitutive heterochromatin of pericentromeric regions. PCH forms chromocenters in the interphase nucleus and chromocenters cluster at the prophase of meiosis. In this context, may also be essential for chromocenter clustering in a catalytic activity-independent manner, possibly through the recruitment polycomb repressive complex 1 (PRC1) to the chromocenters. During embryonic development, may be required for normal meiotic progression in oocytes and meiotic gene activation. Binds preferentially to DNA containing cytidine-phosphate-guanosine (CpG) dinucleotides over CpH (H=A, T, and C), hemimethylated-CpG and hemimethylated-hydroxymethyl-CpG. Dioxygenase that plays a key role in active DNA demethylation. Binds to promoters, particularly to those with high CG content. In hippocampal neurons, isoform 1 regulates the expression of a unique subset of genes compared to isoform 2, although some overlap between both isoforms, hence differentially regulates excitatory synaptic transmission. In hippocampal neuron cell cultures, isoform 1 controls both miniature excitatory postsynaptic current amplitude and frequency. Isoform 1 may regulate genes involved in hippocampal-dependent memory, leading to positive regulation of memory, contrary to isoform 2 that may decrease memory. Its function is as follows. Dioxygenase that plays a key role in active DNA demethylation. As isoform 1, binds to promoters, particularly to those with high CG content, however displays reduced global chromatin affinity compared with isoform 1, leading to decreased global DNA demethylation compared with isoform 1. Contrary to isoform 1, isoform 2 localizes during S phase to sites of ongoing DNA replication in heterochromatin, causing a significant de novo 5hmC formation, globally, and more so in heterochromatin, including LINE 1 interspersed DNA repeats leading to their activation. In hippocampal neurons, isoform 2 regulates the expression of a unique subset of genes compared with isoform 1, although some overlap between both isoforms, hence differentially regulating excitatory synaptic transmission. In hippocampal neuron cell cultures, isoform 2 controls miniature excitatory postsynaptic current frequency, but not amplitude. Isoform 2 may regulate genes involved in hippocampal-dependent memory, leading to negative regulation of memory, contrary to isoform 1 that may improve memory. In immature and partially differentiated gonadotrope cells, represses luteinizing hormone gene LHB expression directly and does not catalyze 5hmC at the gene promoter. This chain is Methylcytosine dioxygenase TET1 (Tet1), found in Mus musculus (Mouse).